A 273-amino-acid polypeptide reads, in one-letter code: Bifunctional protein FolD (273 aa).

NADP(+)-binding positions include 155–157 (GRS), S180, and T221.

This sequence belongs to the tetrahydrofolate dehydrogenase/cyclohydrolase family. As to quaternary structure, homodimer.

The catalysed reaction is (6R)-5,10-methylene-5,6,7,8-tetrahydrofolate + NADP(+) = (6R)-5,10-methenyltetrahydrofolate + NADPH. It carries out the reaction (6R)-5,10-methenyltetrahydrofolate + H2O = (6R)-10-formyltetrahydrofolate + H(+). It functions in the pathway one-carbon metabolism; tetrahydrofolate interconversion. Functionally, catalyzes the oxidation of 5,10-methylenetetrahydrofolate to 5,10-methenyltetrahydrofolate and then the hydrolysis of 5,10-methenyltetrahydrofolate to 10-formyltetrahydrofolate. The chain is Bifunctional protein FolD from Coprothermobacter proteolyticus (strain ATCC 35245 / DSM 5265 / OCM 4 / BT).